The primary structure comprises 315 residues: Acetyl-coenzyme A carboxylase carboxyl transferase subunit alpha (315 aa).

Residues 36-289 form the CoA carboxyltransferase C-terminal domain; it reads LGKKRLELME…RKAVAAELKV (254 aa).

Belongs to the AccA family. In terms of assembly, acetyl-CoA carboxylase is a heterohexamer composed of biotin carboxyl carrier protein (AccB), biotin carboxylase (AccC) and two subunits each of ACCase subunit alpha (AccA) and ACCase subunit beta (AccD).

It localises to the cytoplasm. The catalysed reaction is N(6)-carboxybiotinyl-L-lysyl-[protein] + acetyl-CoA = N(6)-biotinyl-L-lysyl-[protein] + malonyl-CoA. The protein operates within lipid metabolism; malonyl-CoA biosynthesis; malonyl-CoA from acetyl-CoA: step 1/1. In terms of biological role, component of the acetyl coenzyme A carboxylase (ACC) complex. First, biotin carboxylase catalyzes the carboxylation of biotin on its carrier protein (BCCP) and then the CO(2) group is transferred by the carboxyltransferase to acetyl-CoA to form malonyl-CoA. This Francisella philomiragia subsp. philomiragia (strain ATCC 25017 / CCUG 19701 / FSC 153 / O#319-036) protein is Acetyl-coenzyme A carboxylase carboxyl transferase subunit alpha.